The chain runs to 181 residues: Bradykinin-potentiating and C-type natriuretic peptides (181 aa).

The signal sequence occupies residues M1–G23. Positions K24 to S30 are excised as a propeptide. Q31 carries the pyrrolidone carboxylic acid modification. A propeptide spanning residues L41–V43 is cleaved from the precursor. Q44 is modified (pyrrolidone carboxylic acid). Propeptides lie at residues T50–D78 and G90–A157. The segment at E74–L153 is disordered. Residues S104–S114 show a composition bias toward low complexity. A compositionally biased stretch (gly residues) spans A140 to A150. C165 and C181 are joined by a disulfide.

The protein in the N-terminal section; belongs to the bradykinin-potentiating peptide family. It in the C-terminal section; belongs to the natriuretic peptide family. As to expression, venom gland.

The protein localises to the secreted. Bradykinin-potentiating peptide both inhibits the activity of the angiotensin-converting enzyme (ACE) and enhances the action of bradykinin by inhibiting the peptidases that inactivate it. It acts as an indirect hypotensive agent. Functionally, antagonizes the vasodilatory actions of bradykinin at the B2 bradykinin receptor. Has no demonstrable hypotensive activity when injected intravenously in rats. In terms of biological role, has a vasorelaxant activity in rat aortic strips and a diuretic potency in anesthetized rats. May act by activating natriuretic receptors (NPR1 and/or NPR2). This Crotalus durissus collilineatus (Brazilian rattlesnake) protein is Bradykinin-potentiating and C-type natriuretic peptides.